A 191-amino-acid polypeptide reads, in one-letter code: Small ribosomal subunit protein bS6 (191 aa).

Residues 168–191 (KVNLTRKPTPNKSSENKQKVEKQA) form a disordered region. The segment covering 181 to 191 (SENKQKVEKQA) has biased composition (basic and acidic residues).

This sequence belongs to the bacterial ribosomal protein bS6 family.

In terms of biological role, binds together with bS18 to 16S ribosomal RNA. The chain is Small ribosomal subunit protein bS6 from Mycoplasmoides gallisepticum (strain R(low / passage 15 / clone 2)) (Mycoplasma gallisepticum).